The sequence spans 494 residues: uncharacterized protein (494 aa).

Belongs to the TPP enzyme family.

This is an uncharacterized protein from Methanocaldococcus jannaschii (strain ATCC 43067 / DSM 2661 / JAL-1 / JCM 10045 / NBRC 100440) (Methanococcus jannaschii).